We begin with the raw amino-acid sequence, 77 residues long: MATFDDVKAVVVEQLSIDADAVKMESKIIEDLGADSLDVVELIMALEEKFEVEIPDSDAEKLIKIEDVVNYIDNLKK.

The Carrier domain maps to 1-76; it reads MATFDDVKAV…DVVNYIDNLK (76 aa). An O-(pantetheine 4'-phosphoryl)serine modification is found at serine 36.

The protein belongs to the acyl carrier protein (ACP) family. In terms of processing, 4'-phosphopantetheine is transferred from CoA to a specific serine of apo-ACP by AcpS. This modification is essential for activity because fatty acids are bound in thioester linkage to the sulfhydryl of the prosthetic group.

It is found in the cytoplasm. It participates in lipid metabolism; fatty acid biosynthesis. Carrier of the growing fatty acid chain in fatty acid biosynthesis. The polypeptide is Acyl carrier protein (Campylobacter jejuni subsp. jejuni serotype O:6 (strain 81116 / NCTC 11828)).